Reading from the N-terminus, the 40-residue chain is Photosystem II reaction center protein J (40 aa).

The helical transmembrane segment at 8 to 28 threads the bilayer; that stretch reads IPLWIIGTVAGIVVIGLIGLF.

The protein belongs to the PsbJ family. PSII is composed of 1 copy each of membrane proteins PsbA, PsbB, PsbC, PsbD, PsbE, PsbF, PsbH, PsbI, PsbJ, PsbK, PsbL, PsbM, PsbT, PsbX, PsbY, PsbZ, Psb30/Ycf12, at least 3 peripheral proteins of the oxygen-evolving complex and a large number of cofactors. It forms dimeric complexes.

Its subcellular location is the plastid. It is found in the chloroplast thylakoid membrane. One of the components of the core complex of photosystem II (PSII). PSII is a light-driven water:plastoquinone oxidoreductase that uses light energy to abstract electrons from H(2)O, generating O(2) and a proton gradient subsequently used for ATP formation. It consists of a core antenna complex that captures photons, and an electron transfer chain that converts photonic excitation into a charge separation. This Pisum sativum (Garden pea) protein is Photosystem II reaction center protein J.